The primary structure comprises 742 residues: 5-methyltetrahydropteroyltriglutamate--homocysteine methyltransferase (742 aa).

Residues arginine 18–lysine 21 and lysine 112 contribute to the 5-methyltetrahydropteroyltri-L-glutamate site. L-homocysteine-binding positions include isoleucine 420 to serine 422 and glutamate 473. Residues isoleucine 420–serine 422 and glutamate 473 contribute to the L-methionine site. Tryptophan 550 provides a ligand contact to 5-methyltetrahydropteroyltri-L-glutamate. Aspartate 588 is a binding site for L-homocysteine. Aspartate 588 lines the L-methionine pocket. Residue glutamate 594 coordinates 5-methyltetrahydropteroyltri-L-glutamate. Zn(2+)-binding residues include histidine 630, cysteine 632, and glutamate 654. Residue histidine 683 is the Proton donor of the active site. Cysteine 715 contributes to the Zn(2+) binding site.

Belongs to the vitamin-B12 independent methionine synthase family. Zn(2+) is required as a cofactor.

The enzyme catalyses 5-methyltetrahydropteroyltri-L-glutamate + L-homocysteine = tetrahydropteroyltri-L-glutamate + L-methionine. The protein operates within amino-acid biosynthesis; L-methionine biosynthesis via de novo pathway; L-methionine from L-homocysteine (MetE route): step 1/1. Functionally, catalyzes the transfer of a methyl group from 5-methyltetrahydrofolate to homocysteine resulting in methionine formation. The protein is 5-methyltetrahydropteroyltriglutamate--homocysteine methyltransferase of Staphylococcus aureus (strain USA300).